A 208-amino-acid chain; its full sequence is Thymidylate kinase (208 aa).

An ATP-binding site is contributed by 7–14 (GIDGSGKS).

Belongs to the thymidylate kinase family.

It catalyses the reaction dTMP + ATP = dTDP + ADP. Functionally, phosphorylation of dTMP to form dTDP in both de novo and salvage pathways of dTTP synthesis. The sequence is that of Thymidylate kinase from Kosmotoga olearia (strain ATCC BAA-1733 / DSM 21960 / TBF 19.5.1).